Here is a 367-residue protein sequence, read N- to C-terminus: CCN family member 4 (367 aa).

The first 22 residues, 1-22 (MRWLLPWTLAAVAVLMVGNILA), serve as a signal peptide directing secretion. In terms of domain architecture, IGFBP N-terminal spans 45-118 (RPEFCKWPCE…RYAIGVCAQV (74 aa)). Disulfide bonds link C49/C73, C53/C75, C55/C76, and C62/C79. Residue N86 is glycosylated (N-linked (GlcNAc...) asparagine). 2 disulfide bridges follow: C87–C101 and C93–C115. The region spanning 121–186 (VGCVLDGVRY…GQCCEQWVCD (66 aa)) is the VWFC domain. N143 is a glycosylation site (N-linked (GlcNAc...) asparagine). One can recognise a TSP type-1 domain in the interval 215–260 (NCIAYTSPWSPCSTTCGLGISTRISNVNARCWPEQESRLCNLRPCD). Intrachain disulfides connect C273/C310, C290/C324, C301/C340, C304/C342, and C309/C346. The CTCK domain maps to 273–347 (CLAVYQPEEA…NACFCNLSCR (75 aa)). N284 is a glycosylation site (N-linked (GlcNAc...) asparagine). N343 carries N-linked (GlcNAc...) asparagine glycosylation.

This sequence belongs to the CCN family.

It localises to the secreted. Functionally, downstream regulator in the Wnt/Frizzled-signaling pathway. Associated with cell survival. Adheres to skin and melanoma fibroblasts. In vitro binding to skin fibroblasts occurs through the proteoglycans, decorin and biglycan. This Rattus norvegicus (Rat) protein is CCN family member 4 (Ccn4).